The sequence spans 887 residues: Alanine--tRNA ligase (887 aa).

Zn(2+)-binding residues include His-564, His-568, Cys-676, and His-680.

The protein belongs to the class-II aminoacyl-tRNA synthetase family. It depends on Zn(2+) as a cofactor.

Its subcellular location is the cytoplasm. It catalyses the reaction tRNA(Ala) + L-alanine + ATP = L-alanyl-tRNA(Ala) + AMP + diphosphate. Its function is as follows. Catalyzes the attachment of alanine to tRNA(Ala) in a two-step reaction: alanine is first activated by ATP to form Ala-AMP and then transferred to the acceptor end of tRNA(Ala). Also edits incorrectly charged Ser-tRNA(Ala) and Gly-tRNA(Ala) via its editing domain. In Sinorhizobium medicae (strain WSM419) (Ensifer medicae), this protein is Alanine--tRNA ligase.